The following is a 278-amino-acid chain: Pre-hexon-linking protein VIII (278 aa).

Residues 114-199 constitute a propeptide that is removed on maturation; sequence SPSLLSGGAS…ILRYRRLGQQ (86 aa).

The protein belongs to the adenoviridae hexon-linking protein family. Interacts with the peripentonal hexons as well as the hexons in the facets. Part of a complex composed of the core-capsid bridging protein, the endosome lysis protein VI and the hexon-linking protein VIII; these interactions bridge the virus core to the capsid. Post-translationally, cleaved by the viral protease during virion maturation. May cause the middle segment to be shed from the capsid.

The protein localises to the virion. Its subcellular location is the host nucleus. Functionally, structural component of the virion that acts as a cement protein on the capsid interior and which glue the peripentonal hexons and group-of-nine hexons together. In Pantherophis guttatus (Corn snake), this protein is Pre-hexon-linking protein VIII.